The following is a 509-amino-acid chain: Major envelope glycoprotein (509 aa).

The first 17 residues, 1–17 (MVRTAVLILLLVRFSEP), serve as a signal peptide directing secretion. 6 N-linked (GlcNAc...) asparagine; by host glycosylation sites follow: asparagine 34, asparagine 156, asparagine 194, asparagine 351, asparagine 381, and asparagine 423. Serine 479 carries O-palmitoyl serine; by host lipidation. A helical transmembrane segment spans residues 480-502 (FMLGHAFSFMLTVGVIIFLFCMV). Residue asparagine 504 is glycosylated (N-linked (GlcNAc...) asparagine; by host).

The protein belongs to the baculoviridae gp64 family. In terms of processing, palmitoylated.

The protein localises to the virion membrane. It is found in the host cell membrane. Its function is as follows. Envelope phosphoglycoprotein which mediates the fusion of viral and host endosomal membranes leading to virus entry into the host cell. The chain is Major envelope glycoprotein (GP67) from Choristoneura fumiferana nuclear polyhedrosis virus (CfMNPV).